Here is a 243-residue protein sequence, read N- to C-terminus: MRSGVIAQKVGMMRVFTEAGEHIPVTVLKLGNCQVVGHRTKDKNGYTALQLGAGARKSVYMPKAERGQFAVAKVEPKRKVAEFRVSEDAIIPVGAEIQADHFVVGQFVDVTGTSIGKGYAGGMKRWNFGGLRATHGVSVSHRSIGSTGGRQDPGKTFKNKKMPGHMGVDRITTLNLRVVQTDVERGLLLVEGAVPGSKGGWITVRDAVKKPLPKEAAKPGKFKLADGGDKAAAAPEATAGEGA.

2 disordered regions span residues 139–164 (VSHR…KMPG) and 218–243 (KPGK…GEGA). Gln151 is subject to N5-methylglutamine. Residues 218–229 (KPGKFKLADGGD) are compositionally biased toward basic and acidic residues. Low complexity predominate over residues 230–243 (KAAAAPEATAGEGA).

It belongs to the universal ribosomal protein uL3 family. In terms of assembly, part of the 50S ribosomal subunit. Forms a cluster with proteins L14 and L19. Post-translationally, methylated by PrmB.

Its function is as follows. One of the primary rRNA binding proteins, it binds directly near the 3'-end of the 23S rRNA, where it nucleates assembly of the 50S subunit. This chain is Large ribosomal subunit protein uL3, found in Afipia carboxidovorans (strain ATCC 49405 / DSM 1227 / KCTC 32145 / OM5) (Oligotropha carboxidovorans).